A 123-amino-acid chain; its full sequence is Large ribosomal subunit protein uL14 (123 aa).

Belongs to the universal ribosomal protein uL14 family. In terms of assembly, part of the 50S ribosomal subunit. Forms a cluster with proteins L3 and L19. In the 70S ribosome, L14 and L19 interact and together make contacts with the 16S rRNA in bridges B5 and B8.

Binds to 23S rRNA. Forms part of two intersubunit bridges in the 70S ribosome. This chain is Large ribosomal subunit protein uL14, found in Erwinia tasmaniensis (strain DSM 17950 / CFBP 7177 / CIP 109463 / NCPPB 4357 / Et1/99).